A 183-amino-acid polypeptide reads, in one-letter code: ATP synthase subunit delta (183 aa).

Belongs to the ATPase delta chain family. In terms of assembly, F-type ATPases have 2 components, F(1) - the catalytic core - and F(0) - the membrane proton channel. F(1) has five subunits: alpha(3), beta(3), gamma(1), delta(1), epsilon(1). F(0) has three main subunits: a(1), b(2) and c(10-14). The alpha and beta chains form an alternating ring which encloses part of the gamma chain. F(1) is attached to F(0) by a central stalk formed by the gamma and epsilon chains, while a peripheral stalk is formed by the delta and b chains.

It localises to the cell membrane. Functionally, f(1)F(0) ATP synthase produces ATP from ADP in the presence of a proton or sodium gradient. F-type ATPases consist of two structural domains, F(1) containing the extramembraneous catalytic core and F(0) containing the membrane proton channel, linked together by a central stalk and a peripheral stalk. During catalysis, ATP synthesis in the catalytic domain of F(1) is coupled via a rotary mechanism of the central stalk subunits to proton translocation. Its function is as follows. This protein is part of the stalk that links CF(0) to CF(1). It either transmits conformational changes from CF(0) to CF(1) or is implicated in proton conduction. The chain is ATP synthase subunit delta from Mycoplasmopsis synoviae (strain 53) (Mycoplasma synoviae).